We begin with the raw amino-acid sequence, 355 residues long: Putative [LysW]-L-2-aminoadipate/[LysW]-L-glutamate phosphate reductase (355 aa).

Residue 13–16 (SGMT) participates in NADP(+) binding. The active site involves cysteine 153. Asparagine 323 provides a ligand contact to NADP(+).

This sequence belongs to the NAGSA dehydrogenase family. Type 1 subfamily. LysY sub-subfamily.

The protein resides in the cytoplasm. It catalyses the reaction [amino-group carrier protein]-C-terminal-N-(1-carboxy-5-oxopentan-1-yl)-L-glutamine + phosphate + NADP(+) = [amino-group carrier protein]-C-terminal-N-(1-carboxy-5-phosphooxy-5-oxopentan-1-yl)-L-glutamine + NADPH + H(+). The enzyme catalyses [amino-group carrier protein]-C-terminal-gamma-(L-glutamyl-5-semialdehyde)-L-glutamate + phosphate + NADP(+) = [amino-group carrier protein]-C-terminal-gamma-(5-phospho-L-glutamyl)-L-glutamate + NADPH + H(+). It functions in the pathway amino-acid biosynthesis; L-lysine biosynthesis via AAA pathway; L-lysine from L-alpha-aminoadipate (Thermus route): step 3/5. Its pathway is amino-acid biosynthesis; L-arginine biosynthesis. Functionally, involved in both the arginine and lysine biosynthetic pathways. The polypeptide is Putative [LysW]-L-2-aminoadipate/[LysW]-L-glutamate phosphate reductase (Aeropyrum pernix (strain ATCC 700893 / DSM 11879 / JCM 9820 / NBRC 100138 / K1)).